The primary structure comprises 151 residues: Prefoldin subunit 5 (151 aa).

Positions 15–35 form a coiled coil; the sequence is IDQLKALKEQADLEVNLLQDS.

Belongs to the prefoldin subunit alpha family. In terms of assembly, heterohexamer of two PFD-alpha type and four PFD-beta type subunits forming prefoldin co-chaperone complex. Interacts with PFD6. Binds to the DELLA protein GAI.

It is found in the cytoplasm. Its subcellular location is the nucleus. Binds specifically to cytosolic chaperonin (c-CPN) and transfers target proteins to it. Binds to nascent polypeptide chain and promotes folding in an environment in which there are many competing pathways for nonnative proteins. Together with other chaperonins, contribute to the regulation of gene expression by modulating the spliceosome function on pre-mRNA splicing post-transcriptionally by acting as a co-chaperone of Hsp90 to control levels of LSM8. Required for the biogenesis of tubulins and for subsequent microtubules (MTs) organization and dynamicity. Necessary for tolerance to NaCl salt stress. Involved in the process leading to microtubules dissociation in response to gibberellic acid (GA) probably due to the DELLA proteins-mediated translocation of the prefoldin co-chaperone complex from the cytoplasm to the nucleus. Prevents cold acclimation (e.g. 7 days at 4 degrees Celsius) in a DELLA proteins-dependent manner by promoting nuclear proteasome-mediated HY5 degradation, thus modulating the expression of several genes and reducing anthocyanin biosynthesis, but seems not involved in constitutive freezing tolerance. Contributes to the GA-dependent regulation of PIN2 trafficking at the plasma membrane, thus influencing auxin flux. This Arabidopsis thaliana (Mouse-ear cress) protein is Prefoldin subunit 5.